The sequence spans 539 residues: UDP-N-acetylmuramate--L-alanine ligase (539 aa).

ATP is bound at residue 165–171 (GTHGKTT).

It belongs to the MurCDEF family.

It localises to the cytoplasm. It carries out the reaction UDP-N-acetyl-alpha-D-muramate + L-alanine + ATP = UDP-N-acetyl-alpha-D-muramoyl-L-alanine + ADP + phosphate + H(+). It functions in the pathway cell wall biogenesis; peptidoglycan biosynthesis. Functionally, cell wall formation. The sequence is that of UDP-N-acetylmuramate--L-alanine ligase from Trichodesmium erythraeum (strain IMS101).